We begin with the raw amino-acid sequence, 354 residues long: Ferrochelatase (354 aa).

The Fe cation site is built by H214 and E295.

It belongs to the ferrochelatase family.

It is found in the cytoplasm. The enzyme catalyses heme b + 2 H(+) = protoporphyrin IX + Fe(2+). Its pathway is porphyrin-containing compound metabolism; protoheme biosynthesis; protoheme from protoporphyrin-IX: step 1/1. Catalyzes the ferrous insertion into protoporphyrin IX. The polypeptide is Ferrochelatase (Burkholderia orbicola (strain MC0-3)).